Here is a 122-residue protein sequence, read N- to C-terminus: Biogenesis of lysosome-related organelles complex 1 subunit CNL1 (122 aa).

The segment covering 1 to 10 (MQDNSSHSRE) has biased composition (basic and acidic residues). The interval 1–21 (MQDNSSHSRESASAGDDPLGI) is disordered. Positions 63 to 95 (ENTIDKNIAKFKELLEKCDTLENHYEMLNQLAI) form a coiled coil.

The protein belongs to the BLOC1S4 family. Component of the biogenesis of lysosome-related organelles complex-1 (BLOC-1) composed of at least BLI1, BLS1, CNL1, KXD1, SNN1 and VAB2.

It localises to the cytoplasm. Component of the biogenesis of lysosome-related organelles complex-1 (BLOC-1), a complex that is involved in endosomal cargo sorting. The sequence is that of Biogenesis of lysosome-related organelles complex 1 subunit CNL1 (CLN1) from Saccharomyces cerevisiae (strain RM11-1a) (Baker's yeast).